The chain runs to 1253 residues: Cytoplasmic FMR1-interacting protein 1 (1253 aa).

At serine 583 the chain carries Phosphoserine. Threonine 1234 carries the post-translational modification Phosphothreonine.

Belongs to the CYFIP family. In terms of assembly, component of the WAVE1 complex composed of ABI2, CYFIP1 or CYFIP2, BRK1, NCKAP1 and WASF1/WAVE1. Within the complex, a heterodimer containing NCKAP1 and CYFIP1 interacts with a heterotrimer formed by WAVE1, ABI2 and BRK1. Component of the CYFIP1-EIF4E-FMR1 complex which is composed of CYFIP, EIF4E and FMR1. Interacts with FMR1 but does not bind to related proteins FXR1 or FXR2. Interaction with EIF4E stimulates FMR1 binding. Component of the WAVE2 complex composed of ABI1, CYFIP1/SRA1, NCKAP1/NAP1 (NCKAP1l/HEM1 in hematopoietic cells) and WASF2/WAVE2. Interacts with the active GTP-bound form of RAC1. Interacts through its C-terminus with the C-terminus of DPYSL2/CRMP2 which is necessary for DPYSL2-induced axon outgrowth. Interacts with NYAP1, NYAP2 and MYO16. Interacts with TMEM108 (via N-terminus); the interaction associates TMEM108 with the WAVE1 complex.

Its subcellular location is the cytoplasm. It localises to the perinuclear region. It is found in the cell projection. The protein resides in the lamellipodium. The protein localises to the ruffle. Its subcellular location is the synapse. It localises to the synaptosome. Its function is as follows. Component of the CYFIP1-EIF4E-FMR1 complex which binds to the mRNA cap and mediates translational repression. In the CYFIP1-EIF4E-FMR1 complex this subunit is an adapter between EIF4E and FMR1. Promotes the translation repression activity of FMR1 in brain probably by mediating its association with EIF4E and mRNA. Regulates formation of membrane ruffles and lamellipodia. Plays a role in axon outgrowth. Binds to F-actin but not to RNA. Part of the WAVE complex that regulates actin filament reorganization via its interaction with the Arp2/3 complex. Actin remodeling activity is regulated by RAC1. Regulator of epithelial morphogenesis. As component of the WAVE1 complex, required for BDNF-NTRK2 endocytic trafficking and signaling from early endosomes. May act as an invasion suppressor in cancers. In Homo sapiens (Human), this protein is Cytoplasmic FMR1-interacting protein 1.